Consider the following 119-residue polypeptide: Ribonuclease P protein component (119 aa).

This sequence belongs to the RnpA family. Consists of a catalytic RNA component (M1 or rnpB) and a protein subunit.

It catalyses the reaction Endonucleolytic cleavage of RNA, removing 5'-extranucleotides from tRNA precursor.. Its function is as follows. RNaseP catalyzes the removal of the 5'-leader sequence from pre-tRNA to produce the mature 5'-terminus. It can also cleave other RNA substrates such as 4.5S RNA. The protein component plays an auxiliary but essential role in vivo by binding to the 5'-leader sequence and broadening the substrate specificity of the ribozyme. In Pasteurella multocida (strain Pm70), this protein is Ribonuclease P protein component.